Here is a 636-residue protein sequence, read N- to C-terminus: Golgin subfamily A member 8F (636 aa).

Disordered stretches follow at residues 1 to 72 (MAEE…SATL) and 107 to 127 (NKQV…KQKA). A compositionally biased stretch (polar residues) spans 38–50 (TNGSIHETATSGG). Coiled-coil stretches lie at residues 93–148 (VSQL…LNTD), 211–263 (LEQS…MSQE), and 306–412 (EVEL…QQKQ). The segment covering 109 to 127 (QVEHQLEEEKKANNEKQKA) has biased composition (basic and acidic residues). 4 disordered regions span residues 344-364 (LREQ…QEER), 422-449 (ALPG…SIPQ), 496-537 (PITK…GVAA), and 588-612 (PVQG…QDHQ). Over residues 429-441 (GGGHLDSEGEEAP) the composition is skewed to basic and acidic residues. Over residues 509 to 522 (PGGGHHQAGPGQGG) the composition is skewed to gly residues.

Belongs to the GOLGA8 family.

In Homo sapiens (Human), this protein is Golgin subfamily A member 8F.